We begin with the raw amino-acid sequence, 439 residues long: Microfibrillar-associated protein 1 (439 aa).

Polar residues predominate over residues 1–17 (MSVPSSLMKQPPIQSTA). The interval 1–200 (MSVPSSLMKQ…SEDEMEPRLK (200 aa)) is disordered. An N-acetylserine modification is found at Ser-2. A compositionally biased stretch (basic and acidic residues) spans 23–34 (RNEKGEISMEKV). A phosphoserine mark is found at Ser-52 and Ser-53. A compositionally biased stretch (basic and acidic residues) spans 61–70 (QFIKKAKEQE). A Glycyl lysine isopeptide (Lys-Gly) (interchain with G-Cter in SUMO2) cross-link involves residue Lys-67. Acidic residues predominate over residues 71–81 (AEPEEQEEDSS). Phosphoserine is present on residues Ser-94, Ser-116, Ser-118, Ser-132, and Ser-133. Acidic residues-rich tracts occupy residues 112–122 (VVGESDSEVEG) and 131–144 (DSSE…DEEE). Residues 145-163 (IERRRGMMRQRAQERKNEE) show a composition bias toward basic and acidic residues. Over residues 178–195 (ESESESEYEEYTDSEDEM) the composition is skewed to acidic residues. Lys-249 participates in a covalent cross-link: Glycyl lysine isopeptide (Lys-Gly) (interchain with G-Cter in SUMO2). Thr-267 is modified (phosphothreonine). Lys-357 is covalently cross-linked (Glycyl lysine isopeptide (Lys-Gly) (interchain with G-Cter in SUMO2)). A Phosphoserine modification is found at Ser-361. Residues Lys-371, Lys-381, Lys-415, and Lys-418 each participate in a glycyl lysine isopeptide (Lys-Gly) (interchain with G-Cter in SUMO2) cross-link. At Ser-432 the chain carries Phosphoserine.

Belongs to the MFAP1 family. In terms of assembly, component of the spliceosome B complex. Interacts with PRPF38A (via N-terminal interaction domain).

It localises to the nucleus. Functionally, involved in pre-mRNA splicing as a component of the spliceosome. The sequence is that of Microfibrillar-associated protein 1 from Bos taurus (Bovine).